The chain runs to 54 residues: uncharacterized protein (54 aa).

The interval 1 to 54 is disordered; that stretch reads MSKKSTPMTKDAASRIQSSAAKSGGDVSSGSFASRAQSAAAINANNTSNSTGKK. The segment covering 28 to 54 has biased composition (low complexity); it reads SSGSFASRAQSAAAINANNTSNSTGKK.

This is an uncharacterized protein from Dictyostelium discoideum (Social amoeba).